The sequence spans 616 residues: Chaperone protein HscA (616 aa).

Belongs to the heat shock protein 70 family.

Functionally, chaperone involved in the maturation of iron-sulfur cluster-containing proteins. Has a low intrinsic ATPase activity which is markedly stimulated by HscB. Involved in the maturation of IscU. The polypeptide is Chaperone protein HscA (Escherichia coli O139:H28 (strain E24377A / ETEC)).